Here is a 70-residue protein sequence, read N- to C-terminus: Cold shock-like protein CspF (70 aa).

The CSD domain maps to 7 to 67 (GIVKTFDGKS…GLRGPSAANV (61 aa)).

Its subcellular location is the cytoplasm. The polypeptide is Cold shock-like protein CspF (cspF) (Escherichia coli (strain K12)).